A 290-amino-acid chain; its full sequence is Arylamine N-acetyltransferase 1 (290 aa).

Met1 carries the post-translational modification N-acetylmethionine. Cys68 functions as the Acyl-thioester intermediate in the catalytic mechanism. Residues Thr103 and Gly104 each coordinate CoA. Substrate is bound at residue 106-107 (IH). Residues His107 and Asp122 contribute to the active site. CoA-binding residues include Tyr208 and Ser214.

This sequence belongs to the arylamine N-acetyltransferase family.

It localises to the cytoplasm. The enzyme catalyses an arylamine + acetyl-CoA = an N-acetylarylamine + CoA. This Oryctolagus cuniculus (Rabbit) protein is Arylamine N-acetyltransferase 1 (NAT1).